The chain runs to 68 residues: Negative regulatory protein YxlD (68 aa).

2 consecutive transmembrane segments (helical) span residues 5–25 and 37–57; these read EIII…FLFI and WGIV…FFVI.

Its subcellular location is the cell membrane. In terms of biological role, together with YxlE, is important for negative regulation of sigma Y activity, being the major negative regulator. The polypeptide is Negative regulatory protein YxlD (yxlD) (Bacillus subtilis (strain 168)).